Reading from the N-terminus, the 486-residue chain is Small ribosomal subunit protein uS4m (486 aa).

The 70-residue stretch at Lys103–Leu172 folds into the S4 RNA-binding domain.

It belongs to the universal ribosomal protein uS4 family. In terms of assembly, component of the mitochondrial small ribosomal subunit (mt-SSU). Mature yeast 74S mitochondrial ribosomes consist of a small (37S) and a large (54S) subunit. The 37S small subunit contains a 15S ribosomal RNA (15S mt-rRNA) and 34 different proteins. The 54S large subunit contains a 21S rRNA (21S mt-rRNA) and 46 different proteins. uS3m, uS4m and uS5m form the narrow entry site of the mRNA channel.

The protein resides in the mitochondrion. Functionally, component of the mitochondrial ribosome (mitoribosome), a dedicated translation machinery responsible for the synthesis of mitochondrial genome-encoded proteins, including at least some of the essential transmembrane subunits of the mitochondrial respiratory chain. The mitoribosomes are attached to the mitochondrial inner membrane and translation products are cotranslationally integrated into the membrane. In Saccharomyces cerevisiae (strain ATCC 204508 / S288c) (Baker's yeast), this protein is Small ribosomal subunit protein uS4m (NAM9).